A 208-amino-acid chain; its full sequence is Protein GrpE (208 aa).

The span at 1 to 12 shows a compositional bias: basic and acidic residues; that stretch reads MTNKDESVKKNT. The tract at residues 1 to 51 is disordered; the sequence is MTNKDESVKKNTESTVEETNVKQNIDDSVEQAEESKGHLQDEAIEETSDEN. Positions 13–23 are enriched in polar residues; the sequence is ESTVEETNVKQ. The segment covering 42 to 51 has biased composition (acidic residues); sequence EAIEETSDEN.

This sequence belongs to the GrpE family. Homodimer.

The protein localises to the cytoplasm. In terms of biological role, participates actively in the response to hyperosmotic and heat shock by preventing the aggregation of stress-denatured proteins, in association with DnaK and GrpE. It is the nucleotide exchange factor for DnaK and may function as a thermosensor. Unfolded proteins bind initially to DnaJ; upon interaction with the DnaJ-bound protein, DnaK hydrolyzes its bound ATP, resulting in the formation of a stable complex. GrpE releases ADP from DnaK; ATP binding to DnaK triggers the release of the substrate protein, thus completing the reaction cycle. Several rounds of ATP-dependent interactions between DnaJ, DnaK and GrpE are required for fully efficient folding. This chain is Protein GrpE, found in Staphylococcus aureus (strain COL).